Here is a 273-residue protein sequence, read N- to C-terminus: Shikimate dehydrogenase (NADP(+)) (273 aa).

Shikimate contacts are provided by residues 14–16 and T61; that span reads SKS. The active-site Proton acceptor is the K65. The shikimate site is built by N86 and D102. Residues 126–130, 150–155, and M213 each bind NADP(+); these read GAGGA and NRTHAR. Y215 lines the shikimate pocket. Position 237 (G237) interacts with NADP(+).

It belongs to the shikimate dehydrogenase family. As to quaternary structure, homodimer.

It carries out the reaction shikimate + NADP(+) = 3-dehydroshikimate + NADPH + H(+). It participates in metabolic intermediate biosynthesis; chorismate biosynthesis; chorismate from D-erythrose 4-phosphate and phosphoenolpyruvate: step 4/7. Its function is as follows. Involved in the biosynthesis of the chorismate, which leads to the biosynthesis of aromatic amino acids. Catalyzes the reversible NADPH linked reduction of 3-dehydroshikimate (DHSA) to yield shikimate (SA). The chain is Shikimate dehydrogenase (NADP(+)) from Aeromonas hydrophila subsp. hydrophila (strain ATCC 7966 / DSM 30187 / BCRC 13018 / CCUG 14551 / JCM 1027 / KCTC 2358 / NCIMB 9240 / NCTC 8049).